The chain runs to 192 residues: Glycerol-3-phosphate acyltransferase (192 aa).

5 helical membrane-spanning segments follow: residues 1-21 (MFIAILMGAYLLGSIPFAYIL), 49-69 (GLAGLVLLLDIAKSAVLIYSL), 80-100 (ELCIVGLLSVLGHIYPIWLKF), 110-130 (IGVIIPLNPLMLCVFFISWLF), and 143-163 (IVSIIATMIVCYLTESGVVAL).

The protein belongs to the PlsY family. Probably interacts with PlsX.

The protein localises to the cell inner membrane. The catalysed reaction is an acyl phosphate + sn-glycerol 3-phosphate = a 1-acyl-sn-glycero-3-phosphate + phosphate. It functions in the pathway lipid metabolism; phospholipid metabolism. In terms of biological role, catalyzes the transfer of an acyl group from acyl-phosphate (acyl-PO(4)) to glycerol-3-phosphate (G3P) to form lysophosphatidic acid (LPA). This enzyme utilizes acyl-phosphate as fatty acyl donor, but not acyl-CoA or acyl-ACP. This Anaplasma phagocytophilum (strain HZ) protein is Glycerol-3-phosphate acyltransferase.